A 200-amino-acid polypeptide reads, in one-letter code: V-set and transmembrane domain-containing protein 5 (200 aa).

Positions 1–28 (MRPLPSGRRKTRGISLGLFALCLAAARC) are cleaved as a signal peptide. Residues 29-147 (LQSQGVSLYI…VSEILYEDLH (119 aa)) are Extracellular-facing. The 103-residue stretch at 37-139 (YIPQATINAT…QFGTIVLHVS (103 aa)) folds into the Ig-like C2-type domain. N-linked (GlcNAc...) asparagine glycosylation is present at N102. Residues 148-168 (FVAVILAFLAAVAAVLISLMW) traverse the membrane as a helical segment. Residues 169–200 (VCNKCAYKFQRKRRHKLKESTTEEIELEDVEC) lie on the Cytoplasmic side of the membrane. The tract at residues 170 to 186 (CNKCAYKFQRKRRHKLK) is important for CDC42-dependent filopodia induction.

In terms of assembly, can homooligomerize through cis interactions within the same cell membrane. In terms of processing, N-glycosylated.

Its subcellular location is the cell membrane. It localises to the cell projection. The protein resides in the dendrite. The protein localises to the axon. Its function is as follows. Cell adhesion-like membrane protein of the central nervous system (CNS) which modulates both the position and complexity of central neurons by altering their membrane morphology and dynamics. Involved in the formation of neuronal dendrites and protrusions including dendritic filopodia. In synaptogenesis, regulates synapse formation by altering dendritic spine morphology and actin distribution. Promotes formation of unstable neuronal spines such as thin and branched types. Regulates neuronal morphogenesis and migration during cortical development in the brain. The polypeptide is V-set and transmembrane domain-containing protein 5 (VSTM5) (Homo sapiens (Human)).